The chain runs to 124 residues: Small ribosomal subunit protein uS12 (124 aa).

Residue aspartate 89 is modified to 3-methylthioaspartic acid.

It belongs to the universal ribosomal protein uS12 family. Part of the 30S ribosomal subunit. Contacts proteins S8 and S17. May interact with IF1 in the 30S initiation complex.

Its function is as follows. With S4 and S5 plays an important role in translational accuracy. Functionally, interacts with and stabilizes bases of the 16S rRNA that are involved in tRNA selection in the A site and with the mRNA backbone. Located at the interface of the 30S and 50S subunits, it traverses the body of the 30S subunit contacting proteins on the other side and probably holding the rRNA structure together. The combined cluster of proteins S8, S12 and S17 appears to hold together the shoulder and platform of the 30S subunit. The protein is Small ribosomal subunit protein uS12 of Serratia proteamaculans (strain 568).